A 308-amino-acid polypeptide reads, in one-letter code: MSAQKPGLHPRNRHHSRYDLATLCQVNPELRQFLTLTPAGEQSVDFANPLAVKALNKALLAHFYAVANWDIPDGFLCPPVPGRADYIHHLADLLAEASGTIQANASILDIGVGANCIYPLIGVHEYGWRFTGSETSSQALSSAQAIISANPGLNRAIRLRRQKESGAIFNGIIHKNEQYDATLCNPPFHDSATAARAGSERKRRNLGLNKDDALNFGGQQQELWCEGGEVAFIKKMIEESKGFAKQVMWFTSLVSRGENLPPLYRALTDVGAVKVVKKEMAQGQKQSRFIAWTFMNDEQRRRFVNRQR.

Belongs to the methyltransferase superfamily. METTL16/RlmF family.

The protein resides in the cytoplasm. The enzyme catalyses adenosine(1618) in 23S rRNA + S-adenosyl-L-methionine = N(6)-methyladenosine(1618) in 23S rRNA + S-adenosyl-L-homocysteine + H(+). Specifically methylates the adenine in position 1618 of 23S rRNA. The polypeptide is Ribosomal RNA large subunit methyltransferase F (Escherichia coli O127:H6 (strain E2348/69 / EPEC)).